The sequence spans 188 residues: dCTP deaminase (188 aa).

Residues 111-116 (KSTYAR), 135-137 (TLE), glutamine 156, tyrosine 170, and glutamine 180 contribute to the dCTP site. The active-site Proton donor/acceptor is the glutamate 137.

The protein belongs to the dCTP deaminase family. Homotrimer.

It carries out the reaction dCTP + H2O + H(+) = dUTP + NH4(+). Its pathway is pyrimidine metabolism; dUMP biosynthesis; dUMP from dCTP (dUTP route): step 1/2. Its function is as follows. Catalyzes the deamination of dCTP to dUTP. This Dichelobacter nodosus (strain VCS1703A) protein is dCTP deaminase.